Reading from the N-terminus, the 146-residue chain is Catabolic 3-dehydroquinase (146 aa).

Residue tyrosine 24 is the Proton acceptor of the active site. Asparagine 78, histidine 84, and aspartate 91 together coordinate substrate. Residue histidine 104 is the Proton donor of the active site. Residues 105 to 106 and arginine 115 contribute to the substrate site; that span reads IT.

The protein belongs to the type-II 3-dehydroquinase family. As to quaternary structure, homododecamer. Adopts a ring-like structure, composed of an arrangement of two hexameric rings stacked on top of one another.

It catalyses the reaction 3-dehydroquinate = 3-dehydroshikimate + H2O. It participates in aromatic compound metabolism; 3,4-dihydroxybenzoate biosynthesis; 3,4-dihydroxybenzoate from 3-dehydroquinate: step 1/2. Is involved in the catabolism of quinate. Allows the utilization of quinate as carbon source via the beta-ketoadipate pathway. The sequence is that of Catabolic 3-dehydroquinase from Meyerozyma guilliermondii (strain ATCC 6260 / CBS 566 / DSM 6381 / JCM 1539 / NBRC 10279 / NRRL Y-324) (Yeast).